The sequence spans 461 residues: Cysteine--tRNA ligase (461 aa).

Cys28 contacts Zn(2+). Positions 30–40 match the 'HIGH' region motif; sequence VTIYDLCHIGH. Zn(2+)-binding residues include Cys209, His234, and Glu238. Positions 266 to 270 match the 'KMSKS' region motif; that stretch reads KMSKS. Residue Lys269 coordinates ATP.

The protein belongs to the class-I aminoacyl-tRNA synthetase family. Monomer. Zn(2+) is required as a cofactor.

It localises to the cytoplasm. It carries out the reaction tRNA(Cys) + L-cysteine + ATP = L-cysteinyl-tRNA(Cys) + AMP + diphosphate. In Edwardsiella ictaluri (strain 93-146), this protein is Cysteine--tRNA ligase.